The sequence spans 352 residues: UDP-N-acetylglucosamine--N-acetylmuramyl-(pentapeptide) pyrophosphoryl-undecaprenol N-acetylglucosamine transferase 2 (352 aa).

UDP-N-acetyl-alpha-D-glucosamine-binding positions include 11–13 (SAG), Arg164, Ser194, and Gln289.

It belongs to the glycosyltransferase 28 family. MurG subfamily.

Its subcellular location is the cell membrane. It catalyses the reaction di-trans,octa-cis-undecaprenyl diphospho-N-acetyl-alpha-D-muramoyl-L-alanyl-D-glutamyl-meso-2,6-diaminopimeloyl-D-alanyl-D-alanine + UDP-N-acetyl-alpha-D-glucosamine = di-trans,octa-cis-undecaprenyl diphospho-[N-acetyl-alpha-D-glucosaminyl-(1-&gt;4)]-N-acetyl-alpha-D-muramoyl-L-alanyl-D-glutamyl-meso-2,6-diaminopimeloyl-D-alanyl-D-alanine + UDP + H(+). The protein operates within cell wall biogenesis; peptidoglycan biosynthesis. Its function is as follows. Cell wall formation. Catalyzes the transfer of a GlcNAc subunit on undecaprenyl-pyrophosphoryl-MurNAc-pentapeptide (lipid intermediate I) to form undecaprenyl-pyrophosphoryl-MurNAc-(pentapeptide)GlcNAc (lipid intermediate II). This is UDP-N-acetylglucosamine--N-acetylmuramyl-(pentapeptide) pyrophosphoryl-undecaprenol N-acetylglucosamine transferase 2 from Bacillus cereus (strain ATCC 10987 / NRS 248).